Consider the following 883-residue polypeptide: Probable valine--tRNA ligase, cytoplasmic (883 aa).

Residues 1-23 are compositionally biased toward basic and acidic residues; that stretch reads MTLKMDRKALKEEKKKQKLEKFL. The tract at residues 1–49 is disordered; sequence MTLKMDRKALKEEKKKQKLEKFLNKKTTQSKISKAPKPAKNKSSSGYDP. The span at 30 to 45 shows a compositional bias: low complexity; sequence SKISKAPKPAKNKSSS. Residues 82 to 92 carry the 'HIGH' region motif; sequence PNITGSLHIGH. Positions 586–590 match the 'KMSKS' region motif; that stretch reads KMSKS. Lys-589 is an ATP binding site.

Belongs to the class-I aminoacyl-tRNA synthetase family.

It localises to the cytoplasm. The enzyme catalyses tRNA(Val) + L-valine + ATP = L-valyl-tRNA(Val) + AMP + diphosphate. This is Probable valine--tRNA ligase, cytoplasmic from Vairimorpha ceranae (strain BRL01) (Microsporidian parasite).